A 281-amino-acid polypeptide reads, in one-letter code: Diaminopimelate epimerase (281 aa).

Positions 11 and 65 each coordinate substrate. Cysteine 74 (proton donor) is an active-site residue. Substrate is bound by residues 75–76 (GN), asparagine 164, asparagine 197, and 215–216 (ER). The Proton acceptor role is filled by cysteine 224. 225 to 226 (GT) contributes to the substrate binding site.

The protein belongs to the diaminopimelate epimerase family. As to quaternary structure, homodimer.

The protein resides in the cytoplasm. It catalyses the reaction (2S,6S)-2,6-diaminopimelate = meso-2,6-diaminopimelate. The protein operates within amino-acid biosynthesis; L-lysine biosynthesis via DAP pathway; DL-2,6-diaminopimelate from LL-2,6-diaminopimelate: step 1/1. Catalyzes the stereoinversion of LL-2,6-diaminopimelate (L,L-DAP) to meso-diaminopimelate (meso-DAP), a precursor of L-lysine and an essential component of the bacterial peptidoglycan. The protein is Diaminopimelate epimerase of Heliobacterium modesticaldum (strain ATCC 51547 / Ice1).